Reading from the N-terminus, the 712-residue chain is MNNPLVNQAAMVLPVFLLSACLGGGGSFDLDSVDTEAPRPAPKYQDVFSEKPQAQKDQGGYGFAMRLKRRNWYPQAKEDEVKLDESDWEATGLPDEPKELPKRQKSVIEKVETDSDNNIYSSPYLKPSNHQNGNTGNGINQPKNQAKDYENFKYVYSGWFYKHAKREFNLKVEPKSAKNGDDGYIFYHGKEPSRQLPASGKITYKGVWHFATDTKKGQKFREIIQPSKSQGDRYSGFSGDDGEEYSNKNKSTLTDGQEGYGFTSNLEVDFHNKKLTGKLIRNNANTDNNQATTTQYYSLEAQVTGNRFNGKATATDKPQQNSETKEHPFVSDSSSLSGGFFGPQGEELGFRFLSDDQKVAVVGSAKTKDKPANGNTAAASGGTDAAASNGAAGTSSENGKLTTVLDAVELKLGDKEVQKLDNFSNAAQLVVDGIMIPLLPEASESGNNQANQGTNGGTAFTRKFDHTPESDKKDAQAGTQTNGAQTASNTAGDTNGKTKTYEVEVCCSNLNYLKYGMLTRKNSKSAMQAGESSSQADAKTEQVEQSMFLQGERTDEKEIPSEQNIVYRGSWYGYIANDKSTSWSGNASNATSGNRAEFTVNFADKKITGTLTADNRQEATFTIDGNIKDNGFEGTAKTAESGFDLDQSNTTRTPKAYITDAKVQGGFYGPKAEELGGWFAYPGDKQTKNATNASGNSSATVVFGAKRQQPVR.

Residues 1 to 20 (MNNPLVNQAAMVLPVFLLSA) form the signal peptide. C21 carries N-palmitoyl cysteine lipidation. Residue C21 is the site of S-diacylglycerol cysteine attachment. The interval 59–196 (GGYGFAMRLK…YHGKEPSRQL (138 aa)) is N-terminal handle domain. 7 disordered regions span residues 78-104 (EDEVKLDESDWEATGLPDEPKELPKRQ), 123-144 (PYLKPSNHQNGNTGNGINQPKN), 223-256 (IIQPSKSQGDRYSGFSGDDGEEYSNKNKSTLTDG), 309-338 (NGKATATDKPQQNSETKEHPFVSDSSSLSG), 364-398 (SAKTKDKPANGNTAAASGGTDAAASNGAAGTSSEN), 442-495 (ASES…GDTN), and 689-712 (NATNASGNSSATVVFGAKRQQPVR). Residues 95 to 104 (DEPKELPKRQ) are compositionally biased toward basic and acidic residues. Over residues 128-144 (SNHQNGNTGNGINQPKN) the composition is skewed to polar residues. The N-terminal beta barrel domain stretch occupies residues 197–367 (PASGKITYKG…KVAVVGSAKT (171 aa)). 2 stretches are compositionally biased toward low complexity: residues 372-398 (ANGNTAAASGGTDAAASNGAAGTSSEN) and 446-459 (GNNQANQGTNGGTA). Positions 389–555 (NGAAGTSSEN…SMFLQGERTD (167 aa)) are C-terminal handle domain. Basic and acidic residues predominate over residues 462–475 (RKFDHTPESDKKDA). 2 stretches are compositionally biased toward polar residues: residues 477-495 (AGTQTNGAQTASNTAGDTN) and 689-700 (NATNASGNSSAT). Residues 556–712 (EKEIPSEQNI…FGAKRQQPVR (157 aa)) form a C-terminal beta barrel domain region.

Belongs to the TbpB family. Isotype II subfamily. As to quaternary structure, binds only human holo-transferrin (TF), via the TF C-terminus. Forms a large complex with TF and TbpA. Interacts via its C-terminal domain with Slam1.

It localises to the cell outer membrane. It is found in the cell surface. In terms of biological role, neisseria acquires iron by extracting it from serum transferrin (TF) in its human host. Acts as a TF receptor and is required for TF utilization. Involved in the initial capture of TF. Helps select only those TF molecules that can be used as an iron source and concentrates them on the cell surface, maintaining the iron-loaded status of the TF C-terminal lobe until its delivery to TbpA. The chain is Transferrin-binding protein B from Neisseria meningitidis serogroup B (strain ATCC BAA-335 / MC58).